A 384-amino-acid polypeptide reads, in one-letter code: tRNA(Met) cytidine acetate ligase (384 aa).

ATP-binding positions include 7-20 (VAEY…HEFL), Gly101, Asn153, and Arg178.

Belongs to the TmcAL family.

The protein localises to the cytoplasm. It catalyses the reaction cytidine(34) in elongator tRNA(Met) + acetate + ATP = N(4)-acetylcytidine(34) in elongator tRNA(Met) + AMP + diphosphate. Its function is as follows. Catalyzes the formation of N(4)-acetylcytidine (ac(4)C) at the wobble position of elongator tRNA(Met), using acetate and ATP as substrates. First activates an acetate ion to form acetyladenylate (Ac-AMP) and then transfers the acetyl group to tRNA to form ac(4)C34. This Lactobacillus delbrueckii subsp. bulgaricus (strain ATCC 11842 / DSM 20081 / BCRC 10696 / JCM 1002 / NBRC 13953 / NCIMB 11778 / NCTC 12712 / WDCM 00102 / Lb 14) protein is tRNA(Met) cytidine acetate ligase.